Here is a 709-residue protein sequence, read N- to C-terminus: Phosphoribosylformylglycinamidine synthase subunit PurL (709 aa).

The active site involves H36. ATP is bound by residues Y39 and K80. E82 contributes to the Mg(2+) binding site. Substrate is bound by residues 83-86 and R105; that span reads SHNH. H84 functions as the Proton acceptor in the catalytic mechanism. D106 is a binding site for Mg(2+). Q226 contributes to the substrate binding site. D252 serves as a coordination point for Mg(2+). Residue 294-296 coordinates substrate; it reads ETQ. ATP-binding residues include D470 and G507. Position 510 (S510) interacts with substrate.

It belongs to the FGAMS family. In terms of assembly, monomer. Part of the FGAM synthase complex composed of 1 PurL, 1 PurQ and 2 PurS subunits.

It is found in the cytoplasm. It carries out the reaction N(2)-formyl-N(1)-(5-phospho-beta-D-ribosyl)glycinamide + L-glutamine + ATP + H2O = 2-formamido-N(1)-(5-O-phospho-beta-D-ribosyl)acetamidine + L-glutamate + ADP + phosphate + H(+). It participates in purine metabolism; IMP biosynthesis via de novo pathway; 5-amino-1-(5-phospho-D-ribosyl)imidazole from N(2)-formyl-N(1)-(5-phospho-D-ribosyl)glycinamide: step 1/2. Functionally, part of the phosphoribosylformylglycinamidine synthase complex involved in the purines biosynthetic pathway. Catalyzes the ATP-dependent conversion of formylglycinamide ribonucleotide (FGAR) and glutamine to yield formylglycinamidine ribonucleotide (FGAM) and glutamate. The FGAM synthase complex is composed of three subunits. PurQ produces an ammonia molecule by converting glutamine to glutamate. PurL transfers the ammonia molecule to FGAR to form FGAM in an ATP-dependent manner. PurS interacts with PurQ and PurL and is thought to assist in the transfer of the ammonia molecule from PurQ to PurL. This Saccharolobus islandicus (strain M.16.27) (Sulfolobus islandicus) protein is Phosphoribosylformylglycinamidine synthase subunit PurL.